A 632-amino-acid polypeptide reads, in one-letter code: tRNA uridine 5-carboxymethylaminomethyl modification enzyme MnmG (632 aa).

FAD-binding positions include 15-20, I127, and S182; that span reads GAGHAG. 276–290 contacts NAD(+); it reads GPRYCPSIEDKIVRF. Q373 serves as a coordination point for FAD.

It belongs to the MnmG family. In terms of assembly, homodimer. Heterotetramer of two MnmE and two MnmG subunits. FAD serves as cofactor.

The protein localises to the cytoplasm. Its function is as follows. NAD-binding protein involved in the addition of a carboxymethylaminomethyl (cmnm) group at the wobble position (U34) of certain tRNAs, forming tRNA-cmnm(5)s(2)U34. This is tRNA uridine 5-carboxymethylaminomethyl modification enzyme MnmG from Streptococcus pyogenes serotype M6 (strain ATCC BAA-946 / MGAS10394).